A 506-amino-acid polypeptide reads, in one-letter code: Vinckepain-1 (506 aa).

Residues 1–32 are Cytoplasmic-facing; that stretch reads MSDNIGQINFTIPGIQSLDENDTYLKINHKKT. Residues 1-262 constitute a propeptide, activation peptide; the sequence is MSDNIGQINF…LISVDNKSKD (262 aa). The helical; Signal-anchor for type II membrane protein transmembrane segment at 33 to 53 threads the bilayer; the sequence is IKICAYAITAIALFFIGGVFF. Residues 54-506 lie on the Lumenal side of the membrane; that stretch reads KNQAKINALD…VGSDVFFPIY (453 aa). N-linked (GlcNAc...) asparagine glycans are attached at residues N133 and N258. Disulfide bonds link C284/C326, C319/C359, C344/C364, and C413/C495. C287 is an active-site residue. Residue N418 is glycosylated (N-linked (GlcNAc...) asparagine). Residues H419 and N470 contribute to the active site.

The protein belongs to the peptidase C1 family.

The protein resides in the membrane. Cysteine protease. This is Vinckepain-1 from Plasmodium vinckei.